The following is a 116-amino-acid chain: CDKN2AIP N-terminal-like protein (116 aa).

M1 is modified (N-acetylmethionine). The XRN2-binding (XTBD) domain maps to 24 to 116 (AEQFRSYSES…RSELMRKHQS (93 aa)).

This sequence belongs to the CARF family. As to quaternary structure, interacts with XRN2; the interaction is direct.

This Mus musculus (Mouse) protein is CDKN2AIP N-terminal-like protein (Cdkn2aipnl).